The primary structure comprises 588 residues: MEYAAIHHQPFSTDAYSYDGRTVHIKIRTKKGDADHIRFIWGDPYEYNDGKWSANEQPMRKIAATEMHDYWFAEVVPPFRRLQYAFVVTDDHEDIFFGSSGVCPYNEKTLETIHYYFKFPFVHEADTFQAPEWVKSTVWYQIFPERFANGREDLSPKNALPWGSKDPGVNDFFGGDLQGIVDKLDYLEDLGVNGIYLTPIFSAPSNHKYDTLDYFSIDPHFGDPEIFRTLVSQLHQRGMRIMLDAVFNHIGSASPQWQDVVKNGDQSRYKDWFHIHSFPVTDDNYDRFAFTADMPKLNTANPEVQKYLLDIALYWIREFDIDGWRLDVANEVDHVFWKTFRQAVSTEKPDVYILGEIWHSAEPWLRGDEFHAAMNYPFTEPMIEYFADQTISASRMAHRVNAHLMNGMKQANEVMFNLLDSHDTKRLLTRCRNDEKKARALLAFMFAQTGSPCIYYGTEIGLDGENDPLCRKCMVWEKEKQNQDMLQFMKRLIALRKQENTLLTEGHLEWNLLDDKNDFISFSRTLDEKILIYFFNQGNVVQHISLRELNIDRNNKICDAWTEQPLHYHDVIAVQPGEFLILSAAAPV.

The Ca(2+) site is built by Asn-149, Ser-155, Gly-174, and Asp-176. Substrate is bound by residues His-249 and Arg-325. Residue Asp-327 is the Nucleophile of the active site. Glu-356 acts as the Proton donor in catalysis. Residues 422–423 (HD), Asp-467, and Arg-471 contribute to the substrate site.

Belongs to the glycosyl hydrolase 13 family. BbmA subfamily. As to quaternary structure, monomer or homodimer; in equilibrium. It depends on Ca(2+) as a cofactor.

The protein resides in the cytoplasm. Its function is as follows. Hydrolyzes beta-cyclodextrin to maltose and glucose, soluble starch to maltose and glucose, and pullulan to panose with trace amounts of maltose and glucose. It is also able to hydrolyze acarbose. Can also exhibit a transglycosylation activity transferring glucose or maltose to another moiety of sugars by forming alpha-(1,6)- and alpha-(1,3)-glycosidic linkages upon the hydrolysis of substrate at concentrations of 5% or higher. In Bacillus subtilis, this protein is Intracellular maltogenic amylase (bbmA).